A 460-amino-acid chain; its full sequence is Argininosuccinate lyase (460 aa).

Belongs to the lyase 1 family. Argininosuccinate lyase subfamily.

It localises to the cytoplasm. The catalysed reaction is 2-(N(omega)-L-arginino)succinate = fumarate + L-arginine. It participates in amino-acid biosynthesis; L-arginine biosynthesis; L-arginine from L-ornithine and carbamoyl phosphate: step 3/3. The sequence is that of Argininosuccinate lyase from Campylobacter hominis (strain ATCC BAA-381 / DSM 21671 / CCUG 45161 / LMG 19568 / NCTC 13146 / CH001A).